The chain runs to 438 residues: tRNA(Ile)-lysidine synthase (438 aa).

27-32 (SGGVDS) is a binding site for ATP.

Belongs to the tRNA(Ile)-lysidine synthase family.

Its subcellular location is the cytoplasm. The catalysed reaction is cytidine(34) in tRNA(Ile2) + L-lysine + ATP = lysidine(34) in tRNA(Ile2) + AMP + diphosphate + H(+). Ligates lysine onto the cytidine present at position 34 of the AUA codon-specific tRNA(Ile) that contains the anticodon CAU, in an ATP-dependent manner. Cytidine is converted to lysidine, thus changing the amino acid specificity of the tRNA from methionine to isoleucine. In Vibrio parahaemolyticus serotype O3:K6 (strain RIMD 2210633), this protein is tRNA(Ile)-lysidine synthase.